The following is a 308-amino-acid chain: Porphobilinogen deaminase (308 aa).

Position 240 is an S-(dipyrrolylmethanemethyl)cysteine (cysteine 240).

This sequence belongs to the HMBS family. Monomer. Dipyrromethane serves as cofactor.

The catalysed reaction is 4 porphobilinogen + H2O = hydroxymethylbilane + 4 NH4(+). The protein operates within porphyrin-containing compound metabolism; protoporphyrin-IX biosynthesis; coproporphyrinogen-III from 5-aminolevulinate: step 2/4. Functionally, tetrapolymerization of the monopyrrole PBG into the hydroxymethylbilane pre-uroporphyrinogen in several discrete steps. This Laribacter hongkongensis (strain HLHK9) protein is Porphobilinogen deaminase.